Consider the following 190-residue polypeptide: Thiamine biosynthesis protein X (190 aa).

The N-terminal stretch at 1–22 (MSISRTVFGIAATAALSAALVA) is a signal peptide. Residue Cys23 is the site of N-palmitoyl cysteine attachment. Cys23 carries the S-diacylglycerol cysteine lipid modification. A disordered region spans residues 43 to 68 (SQNPTSASSTSTSSATTTSSAPVEED). Over residues 47-63 (TSASSTSTSSATTTSSA) the composition is skewed to low complexity.

It localises to the cell membrane. Its function is as follows. Is necessary for biosynthesis of the 4-methyl-5-(beta-hydroxyethyl)thiazol component from which thiamine is formed. This Corynebacterium glutamicum (strain ATCC 13032 / DSM 20300 / JCM 1318 / BCRC 11384 / CCUG 27702 / LMG 3730 / NBRC 12168 / NCIMB 10025 / NRRL B-2784 / 534) protein is Thiamine biosynthesis protein X (thiX).